The primary structure comprises 161 residues: MQDAITAVINSSDVQGKYLDTAALEKLKSYFSTGELRVRAATTIAANAAAIVKEAVAKSLLYSDITRPGGNMYTTRRYAACIRDLDYYLRYATYAMLAGDPSILDERVLNGLKETYNSLGVPISATVQAIQAMKEVTASLVGPDAGKEMGVYFDYICSGLS.

Position 71 is an N4-methylasparagine (Asn-71). (2R,3E)-phycocyanobilin is bound at residue Cys-81.

Belongs to the phycobiliprotein family. Heterodimer of an alpha and a beta chain. In terms of processing, contains one covalently linked phycocyanobilin chromophore.

The protein localises to the cellular thylakoid membrane. Functionally, light-harvesting photosynthetic bile pigment-protein from the phycobiliprotein complex. Allophycocyanin has a maximum absorption at approximately 650 nanometers. This is Allophycocyanin beta chain (apcB) from Mastigocladus laminosus (Fischerella sp.).